The chain runs to 442 residues: tRNA modification GTPase MnmE (442 aa).

Residues Arg21, Glu79, and Lys118 each contribute to the (6S)-5-formyl-5,6,7,8-tetrahydrofolate site. A TrmE-type G domain is found at 214 to 367 (GFKIAIVGKP…LKEELQNYLN (154 aa)). K(+) is bound at residue Asn224. Residues 224–229 (NVGKSS), 243–249 (SDIAGTT), and 268–271 (DTAG) contribute to the GTP site. Mg(2+) is bound at residue Ser228. Residues Ser243, Ile245, and Thr248 each coordinate K(+). Position 249 (Thr249) interacts with Mg(2+). Lys442 contacts (6S)-5-formyl-5,6,7,8-tetrahydrofolate.

It belongs to the TRAFAC class TrmE-Era-EngA-EngB-Septin-like GTPase superfamily. TrmE GTPase family. As to quaternary structure, homodimer. Heterotetramer of two MnmE and two MnmG subunits. Requires K(+) as cofactor.

It localises to the cytoplasm. Functionally, exhibits a very high intrinsic GTPase hydrolysis rate. Involved in the addition of a carboxymethylaminomethyl (cmnm) group at the wobble position (U34) of certain tRNAs, forming tRNA-cmnm(5)s(2)U34. This is tRNA modification GTPase MnmE from Campylobacter jejuni subsp. jejuni serotype O:2 (strain ATCC 700819 / NCTC 11168).